A 390-amino-acid chain; its full sequence is Putative nickel insertion protein (390 aa).

The protein belongs to the LarC family.

This chain is Putative nickel insertion protein, found in Geotalea uraniireducens (strain Rf4) (Geobacter uraniireducens).